The sequence spans 316 residues: Putative metal-binding protein TP_0034 (316 aa).

The first 19 residues, 1–19 (MQRCSVVAALAGVVFLAQA), serve as a signal peptide directing secretion. Residues His68, His146, and His210 each contribute to the a divalent metal cation site.

Belongs to the bacterial solute-binding protein 9 family.

It localises to the periplasm. Its function is as follows. Part of an ATP-binding cassette (ABC) transport system involved in metal import. Binds a metal with high affinity and specificity and delivers it to the membrane permease for translocation into the cytoplasm. This is Putative metal-binding protein TP_0034 from Treponema pallidum (strain Nichols).